The sequence spans 435 residues: Hydrogenobyrinate a,c-diamide synthase (435 aa).

The region spanning 239-422 is the GATase cobBQ-type domain; it reads RIGVARDASF…IHFYLPSNPQ (184 aa). Cysteine 321 (nucleophile) is an active-site residue.

The protein belongs to the CobB/CbiA family. Mg(2+) serves as cofactor.

It catalyses the reaction hydrogenobyrinate + 2 L-glutamine + 2 ATP + 2 H2O = hydrogenobyrinate a,c-diamide + 2 L-glutamate + 2 ADP + 2 phosphate + 2 H(+). The protein operates within cofactor biosynthesis; adenosylcobalamin biosynthesis; cob(II)yrinate a,c-diamide from precorrin-2 (aerobic route): step 9/10. Functionally, catalyzes the ATP-dependent amidation of the two carboxylate groups at positions a and c of hydrogenobyrinate, using either L-glutamine or ammonia as the nitrogen source. The protein is Hydrogenobyrinate a,c-diamide synthase of Pseudomonas aeruginosa (strain ATCC 15692 / DSM 22644 / CIP 104116 / JCM 14847 / LMG 12228 / 1C / PRS 101 / PAO1).